Here is a 532-residue protein sequence, read N- to C-terminus: Zinc metalloproteinase nas-29 (532 aa).

The first 22 residues, 1 to 22, serve as a signal peptide directing secretion; it reads MISKNTSFCGFLILVLATCMSA. Asn-5, Asn-27, Asn-70, and Asn-106 each carry an N-linked (GlcNAc...) asparagine glycan. Positions 23–134 are excised as a propeptide; that stretch reads QFVSNESIKL…NGESTDRTKR (112 aa). A Peptidase M12A domain is found at 135 to 335; that stretch reads QAYLDNNYPA…HIMNQHYQCQ (201 aa). 6 cysteine pairs are disulfide-bonded: Cys-179–Cys-334, Cys-201–Cys-222, Cys-338–Cys-358, Cys-360–Cys-369, Cys-380–Cys-408, and Cys-435–Cys-456. His-230 is a binding site for Zn(2+). Residue Glu-231 is part of the active site. Zn(2+) contacts are provided by His-234 and His-240. The EGF-like domain maps to 330–370; sequence QHYQCQEKCPTQAPCQNGGFTNSRNCKVCKCPTGFGGAYCQ. One can recognise a CUB domain in the interval 380–494; it reads CGGYLNAEET…VSFEYSFVST (115 aa). A glycan (N-linked (GlcNAc...) asparagine) is linked at Asn-503.

It depends on Zn(2+) as a cofactor.

The protein localises to the secreted. In terms of biological role, metalloprotease. The polypeptide is Zinc metalloproteinase nas-29 (nas-29) (Caenorhabditis elegans).